The following is a 182-amino-acid chain: Ribosome-recycling factor (182 aa).

It belongs to the RRF family.

It localises to the cytoplasm. In terms of biological role, responsible for the release of ribosomes from messenger RNA at the termination of protein biosynthesis. May increase the efficiency of translation by recycling ribosomes from one round of translation to another. This chain is Ribosome-recycling factor, found in Nostoc punctiforme (strain ATCC 29133 / PCC 73102).